Here is a 151-residue protein sequence, read N- to C-terminus: Sec-independent protein translocase protein TatB (151 aa).

The helical transmembrane segment at 1–21 (MFDVSFTELMVIGVIALVVIG) threads the bilayer. The segment at 66-151 (MDETARSMQT…DKTPPTGSAT (86 aa)) is disordered. Basic and acidic residues predominate over residues 93-103 (AELDDTARDAS). Low complexity-rich tracts occupy residues 109-122 (ADAP…VASD) and 133-151 (APPA…GSAT).

This sequence belongs to the TatB family. In terms of assembly, the Tat system comprises two distinct complexes: a TatABC complex, containing multiple copies of TatA, TatB and TatC subunits, and a separate TatA complex, containing only TatA subunits. Substrates initially bind to the TatABC complex, which probably triggers association of the separate TatA complex to form the active translocon.

The protein localises to the cell inner membrane. Part of the twin-arginine translocation (Tat) system that transports large folded proteins containing a characteristic twin-arginine motif in their signal peptide across membranes. Together with TatC, TatB is part of a receptor directly interacting with Tat signal peptides. TatB may form an oligomeric binding site that transiently accommodates folded Tat precursor proteins before their translocation. The protein is Sec-independent protein translocase protein TatB of Bordetella parapertussis (strain 12822 / ATCC BAA-587 / NCTC 13253).